The primary structure comprises 211 residues: ATP phosphoribosyltransferase (211 aa).

It belongs to the ATP phosphoribosyltransferase family. Short subfamily. Heteromultimer composed of HisG and HisZ subunits.

Its subcellular location is the cytoplasm. The enzyme catalyses 1-(5-phospho-beta-D-ribosyl)-ATP + diphosphate = 5-phospho-alpha-D-ribose 1-diphosphate + ATP. It functions in the pathway amino-acid biosynthesis; L-histidine biosynthesis; L-histidine from 5-phospho-alpha-D-ribose 1-diphosphate: step 1/9. In terms of biological role, catalyzes the condensation of ATP and 5-phosphoribose 1-diphosphate to form N'-(5'-phosphoribosyl)-ATP (PR-ATP). Has a crucial role in the pathway because the rate of histidine biosynthesis seems to be controlled primarily by regulation of HisG enzymatic activity. The sequence is that of ATP phosphoribosyltransferase from Pseudomonas fluorescens (strain Pf0-1).